The following is an 804-amino-acid chain: MNYSHNEIEKKWQDYWEANKTFKTSDNLGQKKFYALDMFPYPSGAGLHVGHPEGYTATDIISRYKRMLGYNVLHPMGWDAFGLPAEQYALDTGNDPREFTKENIQTFKRQIKELGFSYDWDREVNTTDPEYYKWTQWIFIQLYNKGLAYVDEVAVNWCPALGTVLSNEEVIDGVSERGGHPVYRRPMKQWVLKITEYADRLLEDLDELDWPESLKDMQRNWIGRSEGASVAFDVKDYNEQIEVFTTRPDTIYGASFLVLSPEHELVDLITTEDNKDDVEAYQKEAAKKSDLERTGLSKEKSGVFTGAYAVNPLSGQQVPIWIADYVLSTYGTGAVMAVPSGDQRDYEFAKTFDLPIIEVIEGGDMSKEAYTGDGPHINSGELNGLYNEAAIEKAIELLENKNAGTRKVNYKLRDWLFSRQRYWGEPIPVIHWEDGSMTTVPEDELPLLLPETDEIKPSGTGESPLANIDEFVNVVDEATGMKGRRETNTMPQWAGSCWYYLRYIDPDNEQMLADPEKLKHWLPVDLYIGGVEHAVLHLLYARFWHKVLFDLGVVPTKEPFQKLFNQGMILGEGNEKMSKSKGNVINPDDIVKSHGADTLRLYEMFMGPLDAAIAWSENGLDGSRRFLDRIWRLLITEDGSISNKVVNNHSKALDKSYHQTVKKVTEDYNSLNFNTAISQLMVFINDCYKAEEIYKPYIEGFIKMLAPIAPHISEELWSRLGHDETITYQPWPSYDEALLVDDEIEIVVQVNGKVRAKINVSKDIAKEEMEQIALDNEHVKSEIEGKDIKKVIAVPKKLVNIVAK.

The 'HIGH' region signature appears at 40–51 (PYPSGAGLHVGH). A 'KMSKS' region motif is present at residues 576 to 580 (KMSKS). ATP is bound at residue K579.

Belongs to the class-I aminoacyl-tRNA synthetase family.

It localises to the cytoplasm. It carries out the reaction tRNA(Leu) + L-leucine + ATP = L-leucyl-tRNA(Leu) + AMP + diphosphate. In Staphylococcus saprophyticus subsp. saprophyticus (strain ATCC 15305 / DSM 20229 / NCIMB 8711 / NCTC 7292 / S-41), this protein is Leucine--tRNA ligase.